The chain runs to 31 residues: Cyclotide cter-D (31 aa).

A cross-link (cyclopeptide (Gly-Asn)) is located at residues 1–31 (GIPCAESCVWIPCTVTALLGCSCKDKVCYLN). 3 disulfide bridges follow: C4–C21, C8–C23, and C13–C28.

Contains 3 disulfide bonds. In terms of processing, this is a cyclic peptide. Expressed in root, seed and nodule but not in flower, stem, shoot, leaf and pod.

Probably participates in a plant defense mechanism. The polypeptide is Cyclotide cter-D (Clitoria ternatea (Butterfly pea)).